Reading from the N-terminus, the 210-residue chain is Redox-sensing transcriptional repressor Rex (210 aa).

Positions 17–56 (KYHRYLNELMKNDVDRISSKELGEKIGFTASQIRQDLNCF) form a DNA-binding region, H-T-H motif. 91–96 (GAGNIG) is a binding site for NAD(+).

Belongs to the transcriptional regulatory Rex family. As to quaternary structure, homodimer.

Its subcellular location is the cytoplasm. Its function is as follows. Modulates transcription in response to changes in cellular NADH/NAD(+) redox state. This chain is Redox-sensing transcriptional repressor Rex, found in Clostridium botulinum (strain Eklund 17B / Type B).